Reading from the N-terminus, the 534-residue chain is CTP synthase (534 aa).

Positions Met-1–Ile-266 are amidoligase domain. Ser-14 is a binding site for CTP. Residue Ser-14 coordinates UTP. ATP contacts are provided by residues Ser-15–Leu-20 and Asp-72. 2 residues coordinate Mg(2+): Asp-72 and Glu-140. CTP is bound by residues Asp-147–Glu-149, Lys-187–Gln-192, and Lys-223. UTP contacts are provided by residues Lys-187–Gln-192 and Lys-223. Arg-239 to Val-241 contributes to the ATP binding site. Residues Thr-291–Glu-533 form the Glutamine amidotransferase type-1 domain. Gly-353 contacts L-glutamine. Cys-380 serves as the catalytic Nucleophile; for glutamine hydrolysis. L-glutamine is bound by residues Leu-381–Gln-384, Glu-404, and Arg-461. Residues His-506 and Glu-508 contribute to the active site.

Belongs to the CTP synthase family. Homotetramer.

The catalysed reaction is UTP + L-glutamine + ATP + H2O = CTP + L-glutamate + ADP + phosphate + 2 H(+). It carries out the reaction L-glutamine + H2O = L-glutamate + NH4(+). The enzyme catalyses UTP + NH4(+) + ATP = CTP + ADP + phosphate + 2 H(+). The protein operates within pyrimidine metabolism; CTP biosynthesis via de novo pathway; CTP from UDP: step 2/2. Its activity is regulated as follows. Allosterically activated by GTP, when glutamine is the substrate; GTP has no effect on the reaction when ammonia is the substrate. The allosteric effector GTP functions by stabilizing the protein conformation that binds the tetrahedral intermediate(s) formed during glutamine hydrolysis. Inhibited by the product CTP, via allosteric rather than competitive inhibition. Catalyzes the ATP-dependent amination of UTP to CTP with either L-glutamine or ammonia as the source of nitrogen. Regulates intracellular CTP levels through interactions with the four ribonucleotide triphosphates. The sequence is that of CTP synthase from Syntrophotalea carbinolica (strain DSM 2380 / NBRC 103641 / GraBd1) (Pelobacter carbinolicus).